The primary structure comprises 518 residues: Alpha-ionylideneethane synthase abl3 (518 aa).

2 disordered regions span residues 294 to 355 (AAPG…SVFE) and 440 to 466 (KAPP…QRSK). Positions 299–339 (TSSDNSSDNRSSSISSTSSTGTDGSGAGDASSVHSSGVHSD) are enriched in low complexity.

Belongs to the alpha-ionylideneethane synthase family.

The protein operates within hormone biosynthesis. Alpha-ionylideneethane synthase involved in the biosynthesis of abscisic acid (ABA), a phytohormone that acts antagonistically toward salicylic acid (SA), jasmonic acid (JA) and ethylene (ETH) signaling, to impede plant defense responses. During pathogen-host interaction, ABA plays a dual role in disease severity by increasing plant susceptibility and accelerating pathogenesis in the fungus itself. The first step of the pathway catalyzes the reaction from farnesyl diphosphate to alpha-ionylideneethane performed by the alpha-ionylideneethane synthase ABA3 via a three-step reaction mechanism involving 2 neutral intermediates, beta-farnesene and allofarnesene. The cytochrome P450 monooxygenase ABA1 might then be involved in the conversion of alpha-ionylideneethane to alpha-ionylideneacetic acid. Alpha-ionylideneacetic acid is further converted to abscisic acid in 2 steps involving the cytochrome P450 monooxygenase ABA2 and the short-chain dehydrogenase/reductase ABA4, via the intermediates 1'-deoxy-ABA or 1',4'-trans-diol-ABA, depending on the order of action of these 2 enzymes. ABA2 is responsible for the hydroxylation of carbon atom C-1' and ABA4 might be involved in the oxidation of the C-4' carbon atom. This chain is Alpha-ionylideneethane synthase abl3, found in Pyricularia oryzae (strain Y34) (Rice blast fungus).